A 442-amino-acid chain; its full sequence is Histidinol dehydrogenase (442 aa).

Residues 1–20 (MLNVTDLRGQTPSKSDIRRA) are disordered. Y129, Q193, and N218 together coordinate NAD(+). The substrate site is built by T241, Q263, and H266. Zn(2+)-binding residues include Q263 and H266. Catalysis depends on proton acceptor residues E332 and H333. Residues H333, D366, E420, and H425 each contribute to the substrate site. D366 provides a ligand contact to Zn(2+). H425 lines the Zn(2+) pocket.

Belongs to the histidinol dehydrogenase family. Zn(2+) is required as a cofactor.

The catalysed reaction is L-histidinol + 2 NAD(+) + H2O = L-histidine + 2 NADH + 3 H(+). Its pathway is amino-acid biosynthesis; L-histidine biosynthesis; L-histidine from 5-phospho-alpha-D-ribose 1-diphosphate: step 9/9. Functionally, catalyzes the sequential NAD-dependent oxidations of L-histidinol to L-histidinaldehyde and then to L-histidine. This is Histidinol dehydrogenase from Corynebacterium glutamicum (strain ATCC 13032 / DSM 20300 / JCM 1318 / BCRC 11384 / CCUG 27702 / LMG 3730 / NBRC 12168 / NCIMB 10025 / NRRL B-2784 / 534).